Reading from the N-terminus, the 156-residue chain is Cyanate hydratase (156 aa).

Catalysis depends on residues Arg96, Glu99, and Ser122.

Belongs to the cyanase family.

The enzyme catalyses cyanate + hydrogencarbonate + 3 H(+) = NH4(+) + 2 CO2. Catalyzes the reaction of cyanate with bicarbonate to produce ammonia and carbon dioxide. This Burkholderia pseudomallei (strain 1106a) protein is Cyanate hydratase.